A 240-amino-acid polypeptide reads, in one-letter code: Phosphoribosyl isomerase A (240 aa).

The Proton acceptor role is filled by Asp11. Residue Asp130 is the Proton donor of the active site.

This sequence belongs to the HisA/HisF family. In terms of assembly, monomer.

It localises to the cytoplasm. It catalyses the reaction 1-(5-phospho-beta-D-ribosyl)-5-[(5-phospho-beta-D-ribosylamino)methylideneamino]imidazole-4-carboxamide = 5-[(5-phospho-1-deoxy-D-ribulos-1-ylimino)methylamino]-1-(5-phospho-beta-D-ribosyl)imidazole-4-carboxamide. It carries out the reaction N-(5-phospho-beta-D-ribosyl)anthranilate = 1-(2-carboxyphenylamino)-1-deoxy-D-ribulose 5-phosphate. It participates in amino-acid biosynthesis; L-histidine biosynthesis; L-histidine from 5-phospho-alpha-D-ribose 1-diphosphate: step 4/9. Its pathway is amino-acid biosynthesis; L-tryptophan biosynthesis; L-tryptophan from chorismate: step 3/5. Catalyzes the isomerization of the aminoaldose moiety of ProFAR to the aminoketose of PRFAR in the biosynthesis pathway for histidine and the isomerization of the aminoaldose PRA to the aminoketose CdRP in the biosynthsis pathway for tryptophan. The sequence is that of Phosphoribosyl isomerase A (priA) from Streptomyces coelicolor (strain ATCC BAA-471 / A3(2) / M145).